Here is a 241-residue protein sequence, read N- to C-terminus: ATP synthase subunit a (241 aa).

Helical transmembrane passes span 29–49, 54–74, 86–106, 114–134, 153–173, 177–197, 200–220, and 221–241; these read NSSL…LFGI, VIPG…ISII, IPLI…GVLP, HVIV…IVGF, WLAP…PVSL, LAAN…FIVN, IFFT…EVFV, and AILQ…DAVK.

Belongs to the ATPase A chain family. F-type ATPases have 2 components, CF(1) - the catalytic core - and CF(0) - the membrane proton channel. CF(1) has five subunits: alpha(3), beta(3), gamma(1), delta(1), epsilon(1). CF(0) has three main subunits: a(1), b(2) and c(9-12). The alpha and beta chains form an alternating ring which encloses part of the gamma chain. CF(1) is attached to CF(0) by a central stalk formed by the gamma and epsilon chains, while a peripheral stalk is formed by the delta and b chains.

It localises to the cell inner membrane. Key component of the proton channel; it plays a direct role in the translocation of protons across the membrane. The polypeptide is ATP synthase subunit a (Wolbachia sp. subsp. Drosophila simulans (strain wRi)).